A 137-amino-acid polypeptide reads, in one-letter code: Small ribosomal subunit protein eS6 (137 aa).

The segment covering 114–127 (LPVEEAPAEDAPES) has biased composition (acidic residues). The interval 114–137 (LPVEEAPAEDAPESAEEKSEDKKE) is disordered. Residues 128 to 137 (AEEKSEDKKE) are compositionally biased toward basic and acidic residues.

This sequence belongs to the eukaryotic ribosomal protein eS6 family.

The sequence is that of Small ribosomal subunit protein eS6 from Nitrosopumilus maritimus (strain SCM1).